We begin with the raw amino-acid sequence, 270 residues long: Elongation factor Tu (270 aa).

Positions 1 to 103 (GILVVSAADG…AVDDYIPTPE (103 aa)) constitute a tr-type G domain. 35 to 38 (NKVD) serves as a coordination point for GTP.

It belongs to the TRAFAC class translation factor GTPase superfamily. Classic translation factor GTPase family. EF-Tu/EF-1A subfamily. Monomer.

The protein resides in the cytoplasm. It catalyses the reaction GTP + H2O = GDP + phosphate + H(+). Its function is as follows. GTP hydrolase that promotes the GTP-dependent binding of aminoacyl-tRNA to the A-site of ribosomes during protein biosynthesis. This chain is Elongation factor Tu (tuf), found in Staphylococcus warneri.